The primary structure comprises 532 residues: 2,3-bisphosphoglycerate-independent phosphoglycerate mutase (532 aa).

2 residues coordinate Mn(2+): D15 and S65. Catalysis depends on S65, which acts as the Phosphoserine intermediate. Residues H126, 156 to 157 (RD), R188, R194, 258 to 261 (RPDR), and K331 contribute to the substrate site. 5 residues coordinate Mn(2+): D398, H402, D439, H440, and H457.

It belongs to the BPG-independent phosphoglycerate mutase family. As to quaternary structure, monomer. It depends on Mn(2+) as a cofactor.

The catalysed reaction is (2R)-2-phosphoglycerate = (2R)-3-phosphoglycerate. Its pathway is carbohydrate degradation; glycolysis; pyruvate from D-glyceraldehyde 3-phosphate: step 3/5. In terms of biological role, catalyzes the interconversion of 2-phosphoglycerate and 3-phosphoglycerate. In Trichodesmium erythraeum (strain IMS101), this protein is 2,3-bisphosphoglycerate-independent phosphoglycerate mutase.